A 707-amino-acid polypeptide reads, in one-letter code: Early transcription factor 82 kDa subunit (707 aa).

Belongs to the poxviridae VETF large subunit family. Heterodimer of a 70 kDa and a 82 kDa subunit. Part of the early transcription complex composed of ETF, RAP94, and the DNA-directed RNA polymerase.

The protein resides in the virion. Acts with RNA polymerase to initiate transcription from early gene promoters. Is recruited by the RPO-associated protein of 94 kDa (RAP94) to form the early transcription complex, which also contains the core RNA polymerase. ETF heterodimer binds to early gene promoters. In Molluscum contagiosum virus subtype 1 (MOCV), this protein is Early transcription factor 82 kDa subunit (VETFL).